A 292-amino-acid polypeptide reads, in one-letter code: Light-independent protochlorophyllide reductase iron-sulfur ATP-binding protein (292 aa).

Residues 10-15 (GIGKST) and K39 contribute to the ATP site. S14 lines the Mg(2+) pocket. C95 is a binding site for [4Fe-4S] cluster. Residue 182 to 183 (NR) coordinates ATP.

The protein belongs to the NifH/BchL/ChlL family. In terms of assembly, homodimer. Protochlorophyllide reductase is composed of three subunits; ChlL, ChlN and ChlB. [4Fe-4S] cluster serves as cofactor.

The protein resides in the plastid. The protein localises to the chloroplast. It catalyses the reaction chlorophyllide a + oxidized 2[4Fe-4S]-[ferredoxin] + 2 ADP + 2 phosphate = protochlorophyllide a + reduced 2[4Fe-4S]-[ferredoxin] + 2 ATP + 2 H2O. Its pathway is porphyrin-containing compound metabolism; chlorophyll biosynthesis (light-independent). In terms of biological role, component of the dark-operative protochlorophyllide reductase (DPOR) that uses Mg-ATP and reduced ferredoxin to reduce ring D of protochlorophyllide (Pchlide) to form chlorophyllide a (Chlide). This reaction is light-independent. The L component serves as a unique electron donor to the NB-component of the complex, and binds Mg-ATP. The polypeptide is Light-independent protochlorophyllide reductase iron-sulfur ATP-binding protein (Huperzia lucidula (Shining clubmoss)).